A 739-amino-acid polypeptide reads, in one-letter code: Phosphoribosylformylglycinamidine synthase subunit PurL (739 aa).

The active site involves histidine 53. ATP is bound by residues tyrosine 56 and lysine 95. A Mg(2+)-binding site is contributed by glutamate 97. Residues 98–101 and arginine 120 contribute to the substrate site; that span reads SHNH. The Proton acceptor role is filled by histidine 99. Aspartate 121 contacts Mg(2+). Glutamine 244 contributes to the substrate binding site. Aspartate 274 is a binding site for Mg(2+). 318 to 320 provides a ligand contact to substrate; it reads ESQ. Residues aspartate 501 and glycine 538 each contribute to the ATP site. Asparagine 539 provides a ligand contact to Mg(2+). Serine 541 is a binding site for substrate.

The protein belongs to the FGAMS family. In terms of assembly, monomer. Part of the FGAM synthase complex composed of 1 PurL, 1 PurQ and 2 PurS subunits.

The protein resides in the cytoplasm. The catalysed reaction is N(2)-formyl-N(1)-(5-phospho-beta-D-ribosyl)glycinamide + L-glutamine + ATP + H2O = 2-formamido-N(1)-(5-O-phospho-beta-D-ribosyl)acetamidine + L-glutamate + ADP + phosphate + H(+). Its pathway is purine metabolism; IMP biosynthesis via de novo pathway; 5-amino-1-(5-phospho-D-ribosyl)imidazole from N(2)-formyl-N(1)-(5-phospho-D-ribosyl)glycinamide: step 1/2. Part of the phosphoribosylformylglycinamidine synthase complex involved in the purines biosynthetic pathway. Catalyzes the ATP-dependent conversion of formylglycinamide ribonucleotide (FGAR) and glutamine to yield formylglycinamidine ribonucleotide (FGAM) and glutamate. The FGAM synthase complex is composed of three subunits. PurQ produces an ammonia molecule by converting glutamine to glutamate. PurL transfers the ammonia molecule to FGAR to form FGAM in an ATP-dependent manner. PurS interacts with PurQ and PurL and is thought to assist in the transfer of the ammonia molecule from PurQ to PurL. In Listeria welshimeri serovar 6b (strain ATCC 35897 / DSM 20650 / CCUG 15529 / CIP 8149 / NCTC 11857 / SLCC 5334 / V8), this protein is Phosphoribosylformylglycinamidine synthase subunit PurL.